Here is a 330-residue protein sequence, read N- to C-terminus: Ribosomal RNA small subunit methyltransferase H (330 aa).

Residues 51 to 53 (GGH), D70, D118, and Q125 each bind S-adenosyl-L-methionine. The interval 276-330 (STDSTPPGLPVPLPDRQPELRLLTRGAELPTEQETAANPRAASARLRAAERTREP) is disordered. Residues 311-321 (AANPRAASARL) are compositionally biased toward low complexity.

Belongs to the methyltransferase superfamily. RsmH family.

Its subcellular location is the cytoplasm. The catalysed reaction is cytidine(1402) in 16S rRNA + S-adenosyl-L-methionine = N(4)-methylcytidine(1402) in 16S rRNA + S-adenosyl-L-homocysteine + H(+). Specifically methylates the N4 position of cytidine in position 1402 (C1402) of 16S rRNA. This chain is Ribosomal RNA small subunit methyltransferase H, found in Thermobifida fusca (strain YX).